The chain runs to 161 residues: RNA pyrophosphohydrolase (161 aa).

The Nudix hydrolase domain maps to 6–149 (GFRPNVGIIL…KRDVYRKAMV (144 aa)). The Nudix box motif lies at 38–59 (GGIQFGETPEQALFRELREEIG).

Belongs to the Nudix hydrolase family. RppH subfamily. Requires a divalent metal cation as cofactor.

In terms of biological role, accelerates the degradation of transcripts by removing pyrophosphate from the 5'-end of triphosphorylated RNA, leading to a more labile monophosphorylated state that can stimulate subsequent ribonuclease cleavage. This is RNA pyrophosphohydrolase from Acinetobacter baumannii (strain AB307-0294).